The chain runs to 87 residues: Omega-lycotoxin-Am1a (87 aa).

Positions 1-17 (MKLSIFFVLFFIAIAYC) are cleaved as a signal peptide. The propeptide occupies 18–40 (QPEFLDDEEDEVEETLPVAEEGR). Disulfide bonds link C44–C59, C51–C64, C58–C84, and C66–C82.

It belongs to the neurotoxin omega-lctx family. In terms of tissue distribution, expressed by the venom gland.

The protein resides in the secreted. Functionally, modulates Cav2.1/CACNA1A voltage-gated calcium channels (P/Q-type currents) in rat cerebellar Purkinje cells and hippocampal CA1-CA3 neurons. At saturating concentrations (&gt;10 nM) decelerates activation kinetics and slightly increases peak amplitude without affecting deactivation kinetics. In vivo, does not cause death when intravenously injected into mice. In rat models, through its activity on Cav2.1/CACNA1A, has an ameliorative effect on memory defects provoked by hyperstimulation of N-methyl-D-aspartate receptors (NMDARs) in the hippocampus. The chain is Omega-lycotoxin-Am1a from Alopecosa marikovskyi (Wolf spider).